We begin with the raw amino-acid sequence, 427 residues long: MESLPRRVALLSVHTSPLHQPGTGDAGGMNVYIVELSRRLADLGIEVEIFTRATTGALPPAVDLAPGVLVRHVTAGPYEGLSKEDLPGQLCAFTSGVLRTEAMHEPGYYDLIHSHYWLSGQVGWLAKERWGVPLIHSMHTLGKVKNAALALGDDPEPTARLVGEDQVVDAADRLIANTDQEASELVRLYGADPGRVSTVNPGVDLDRFRPGDKRAARESVGLPPDAAVLLFVGRIQPLKAPDVLLRAAAELIAREPERREKLVVAVVGGPSGSGLAEPTHLHRLARRLGIADVVRFVKPVDQTRLADWYRAADIAVVPSYSESFGLVAIEAQACGTPVVAARVGGLATAVADGRSGTLVAGHDPGDYATAVAGLLDAPHRLADFGENAVEHAARFGWSATAAATADVYSRSIEDLRALRYRELCAGQ.

Residue His-14 coordinates 1D-myo-inositol 3-phosphate. Residues 20-21 (QP) and Gly-28 each bind UDP-N-acetyl-alpha-D-glucosamine. Residues 25–30 (DAGGMN), Lys-83, Tyr-116, Thr-140, and Arg-160 contribute to the 1D-myo-inositol 3-phosphate site. UDP-N-acetyl-alpha-D-glucosamine contacts are provided by Arg-234, Lys-239, and Val-300. Mg(2+) is bound by residues Tyr-309, Arg-310, and Ala-312. The UDP-N-acetyl-alpha-D-glucosamine site is built by Glu-322 and Glu-330. A Mg(2+)-binding site is contributed by Thr-336.

Belongs to the glycosyltransferase group 1 family. MshA subfamily. As to quaternary structure, homodimer.

It catalyses the reaction 1D-myo-inositol 3-phosphate + UDP-N-acetyl-alpha-D-glucosamine = 1D-myo-inositol 2-acetamido-2-deoxy-alpha-D-glucopyranoside 3-phosphate + UDP + H(+). Its function is as follows. Catalyzes the transfer of a N-acetyl-glucosamine moiety to 1D-myo-inositol 3-phosphate to produce 1D-myo-inositol 2-acetamido-2-deoxy-glucopyranoside 3-phosphate in the mycothiol biosynthesis pathway. The chain is D-inositol 3-phosphate glycosyltransferase 2 from Catenulispora acidiphila (strain DSM 44928 / JCM 14897 / NBRC 102108 / NRRL B-24433 / ID139908).